The chain runs to 545 residues: ATP synthase subunit alpha (545 aa).

173–180 contributes to the ATP binding site; the sequence is GDRQTGKT.

It belongs to the ATPase alpha/beta chains family. In terms of assembly, F-type ATPases have 2 components, CF(1) - the catalytic core - and CF(0) - the membrane proton channel. CF(1) has five subunits: alpha(3), beta(3), gamma(1), delta(1), epsilon(1). CF(0) has three main subunits: a(1), b(2) and c(9-12). The alpha and beta chains form an alternating ring which encloses part of the gamma chain. CF(1) is attached to CF(0) by a central stalk formed by the gamma and epsilon chains, while a peripheral stalk is formed by the delta and b chains.

It localises to the cell membrane. It catalyses the reaction ATP + H2O + 4 H(+)(in) = ADP + phosphate + 5 H(+)(out). Its function is as follows. Produces ATP from ADP in the presence of a proton gradient across the membrane. The alpha chain is a regulatory subunit. This chain is ATP synthase subunit alpha, found in Clavibacter sepedonicus (Clavibacter michiganensis subsp. sepedonicus).